The chain runs to 326 residues: Tryptophan--tRNA ligase (326 aa).

ATP is bound by residues 11-13 (QPT) and 19-20 (GN). The 'HIGH' region motif lies at 12–20 (PTGQIHLGN). D135 lines the L-tryptophan pocket. ATP is bound by residues 147-149 (GED), V186, and 195-199 (KMSKS). A 'KMSKS' region motif is present at residues 195 to 199 (KMSKS).

This sequence belongs to the class-I aminoacyl-tRNA synthetase family. Homodimer.

It is found in the cytoplasm. It carries out the reaction tRNA(Trp) + L-tryptophan + ATP = L-tryptophyl-tRNA(Trp) + AMP + diphosphate + H(+). Its function is as follows. Catalyzes the attachment of tryptophan to tRNA(Trp). The protein is Tryptophan--tRNA ligase of Helicobacter pylori (strain J99 / ATCC 700824) (Campylobacter pylori J99).